The sequence spans 201 residues: Recombination protein RecR (201 aa).

The segment at 57-72 (CKLCQIYTEQPLCNIC) adopts a C4-type zinc-finger fold. A Toprim domain is found at 80 to 175 (TLLCVVESPA…KCSRIAHGVP (96 aa)).

This sequence belongs to the RecR family.

May play a role in DNA repair. It seems to be involved in an RecBC-independent recombinational process of DNA repair. It may act with RecF and RecO. In Coxiella burnetii (strain RSA 493 / Nine Mile phase I), this protein is Recombination protein RecR.